The chain runs to 695 residues: Elongation factor G 1 (695 aa).

In terms of domain architecture, tr-type G spans 6–281; that stretch reads TRYRNIGIFA…AVVDYLPNPK (276 aa). GTP is bound by residues 15–22, 79–83, and 133–136; these read AHVDAGKT, DTPGH, and NKLD.

Belongs to the TRAFAC class translation factor GTPase superfamily. Classic translation factor GTPase family. EF-G/EF-2 subfamily.

It localises to the cytoplasm. Its function is as follows. Catalyzes the GTP-dependent ribosomal translocation step during translation elongation. During this step, the ribosome changes from the pre-translocational (PRE) to the post-translocational (POST) state as the newly formed A-site-bound peptidyl-tRNA and P-site-bound deacylated tRNA move to the P and E sites, respectively. Catalyzes the coordinated movement of the two tRNA molecules, the mRNA and conformational changes in the ribosome. In Synechocystis sp. (strain ATCC 27184 / PCC 6803 / Kazusa), this protein is Elongation factor G 1 (fusA).